The chain runs to 380 residues: Cytochrome b (380 aa).

A run of 4 helical transmembrane segments spans residues 33–53 (FGSLLGLCLITQTLTGLFLAM), 77–98 (WLLRNIHANGASFFFICIYLHI), 113–133 (WNIGVLLLLLVMMTAFVGYVL), and 178–198 (FFTFHFLLPFIIMGTTMLHLL). His-83 and His-97 together coordinate heme b. Residues His-182 and His-196 each contribute to the heme b site. His-201 contacts a ubiquinone. 4 helical membrane passes run 226-246 (YKDLLGFTILLATLSALALLN), 288-308 (LGGVLALLFSILILVVVPTLH), 320-340 (SSQTLFWILVANMLVLTWIGG), and 347-367 (FIIIGQVASVLYFMLFLFFIP).

The protein belongs to the cytochrome b family. In terms of assembly, the cytochrome bc1 complex contains 3 respiratory subunits (MT-CYB, CYC1 and UQCRFS1), 2 core proteins (UQCRC1 and UQCRC2) and probably 6 low-molecular weight proteins. Heme b serves as cofactor.

Its subcellular location is the mitochondrion inner membrane. Its function is as follows. Component of the ubiquinol-cytochrome c reductase complex (complex III or cytochrome b-c1 complex) that is part of the mitochondrial respiratory chain. The b-c1 complex mediates electron transfer from ubiquinol to cytochrome c. Contributes to the generation of a proton gradient across the mitochondrial membrane that is then used for ATP synthesis. The polypeptide is Cytochrome b (mt-cyb) (Lepisosteus oculatus (Spotted gar)).